Here is a 227-residue protein sequence, read N- to C-terminus: Orotidine 5'-phosphate decarboxylase (227 aa).

Residues D8, K30, 59–68 (DLKLYDIPYT), T118, R178, Q187, G207, and R208 each bind substrate. K61 (proton donor) is an active-site residue.

This sequence belongs to the OMP decarboxylase family. Type 1 subfamily. As to quaternary structure, homodimer.

The catalysed reaction is orotidine 5'-phosphate + H(+) = UMP + CO2. Its pathway is pyrimidine metabolism; UMP biosynthesis via de novo pathway; UMP from orotate: step 2/2. Catalyzes the decarboxylation of orotidine 5'-monophosphate (OMP) to uridine 5'-monophosphate (UMP). This is Orotidine 5'-phosphate decarboxylase from Helicobacter pylori (strain J99 / ATCC 700824) (Campylobacter pylori J99).